Reading from the N-terminus, the 256-residue chain is Adenylate kinase (256 aa).

49 to 54 is an ATP binding site; the sequence is GAGKGT. Residues 69 to 98 form an NMP region; that stretch reads ATGDMLRDQVEKKTPLGIAAKKIMDAGGLV. AMP is bound by residues Thr-70, Arg-75, 96 to 98, 125 to 128, and Gln-132; these read GLV and GFPR. Residues 166–203 are LID; sequence GRLIHPASGRSYHKIFNPPKKAGIDDLTGEPLIQRSDD. Residues Arg-167 and 176–177 contribute to the ATP site; that span reads SY. 2 residues coordinate AMP: Arg-200 and Arg-211. Gln-239 provides a ligand contact to ATP.

Belongs to the adenylate kinase family. AK2 subfamily. As to quaternary structure, monomer.

It localises to the cytoplasm. The protein resides in the cytosol. The protein localises to the mitochondrion intermembrane space. The catalysed reaction is AMP + ATP = 2 ADP. Functionally, catalyzes the reversible transfer of the terminal phosphate group between ATP and AMP. Plays an important role in cellular energy homeostasis and in adenine nucleotide metabolism. Adenylate kinase activity is critical for regulation of the phosphate utilization and the AMP de novo biosynthesis pathways. The sequence is that of Adenylate kinase from Coprinopsis cinerea (strain Okayama-7 / 130 / ATCC MYA-4618 / FGSC 9003) (Inky cap fungus).